The following is a 417-amino-acid chain: Carboxypeptidase B (417 aa).

The N-terminal stretch at M1 to H16 is a signal peptide. Positions H17–R110 are cleaved as a propeptide — activation peptide. Residues K118–V412 form the Peptidase M14 domain. A disulfide bond links C173 and C186. Residues H176 and E179 each contribute to the Zn(2+) site. Residues H176–E179, R234, and N251–R252 contribute to the substrate site. Cystine bridges form between C245-C268 and C259-C273. H304 contributes to the Zn(2+) binding site. Residues S305–Y306 and Y356 contribute to the substrate site. The active-site Proton donor/acceptor is the E378.

This sequence belongs to the peptidase M14 family. Zn(2+) serves as cofactor.

The protein resides in the secreted. It localises to the zymogen granule lumen. The enzyme catalyses Preferential release of a C-terminal lysine or arginine amino acid.. The chain is Carboxypeptidase B (CPB1) from Bos taurus (Bovine).